A 362-amino-acid chain; its full sequence is Putative sphingolipid delta(4)-desaturase/C4-monooxygenase (362 aa).

The next 3 membrane-spanning stretches (helical) occupy residues 45 to 61, 71 to 91, and 107 to 127; these read YVVS…CWLL, LEAY…IHDI, and FFGM…FKKY. Positions 89–93 match the Histidine box-1 motif; it reads HDISH. A Histidine box-2 motif is present at residues 128–132; that stretch reads HVEHH. 2 helical membrane passes run 160 to 177 and 198 to 218; these read LLWL…PLII and LLIL…GTII. The Histidine box-3 motif lies at 259-263; it reads HVEHH.

This sequence belongs to the fatty acid desaturase type 1 family. DEGS subfamily.

The protein localises to the membrane. It catalyses the reaction an N-acyl-15-methylhexadecasphinganine + 2 Fe(II)-[cytochrome b5] + O2 + 2 H(+) = an N-acyl-4-hydroxy-15-methylhexadecasphinganine + 2 Fe(III)-[cytochrome b5] + H2O. The enzyme catalyses an N-acyl-15-methylhexadecasphinganine + 2 Fe(II)-[cytochrome b5] + O2 + 2 H(+) = an N-acyl-15-methylhexadecasphing-4-enine + 2 Fe(III)-[cytochrome b5] + 2 H2O. It carries out the reaction a dihydroceramide + 2 Fe(II)-[cytochrome b5] + O2 + 2 H(+) = a phytoceramide + 2 Fe(III)-[cytochrome b5] + H2O. The catalysed reaction is an N-acylsphinganine + 2 Fe(II)-[cytochrome b5] + O2 + 2 H(+) = an N-acylsphing-4-enine + 2 Fe(III)-[cytochrome b5] + 2 H2O. It catalyses the reaction N-octanoylsphinganine + 2 Fe(II)-[cytochrome b5] + O2 + 2 H(+) = N-octanoyl-4-hydroxysphinganine + 2 Fe(III)-[cytochrome b5] + H2O. The enzyme catalyses an N-acylsphinganine + 2 Fe(II)-[cytochrome b5] + O2 + 2 H(+) = an N-acyl-(4R)-4-hydroxysphinganine + 2 Fe(III)-[cytochrome b5] + H2O. The protein operates within lipid metabolism; sphingolipid metabolism. Bifunctional enzyme which acts both as a sphingolipid delta(4)-desaturase and a sphingolipid C4-monooxygenase. C.elegans contain specific sphingoid bases, which are unique or different in structure compared to the sphingoid bases found in other animals. Two examples of these distinctive compounds are: 15-methylhexadecasphinganine and 15-methylhexadecasphing-4-enine and this enzyme can catalyze their conversion. This Caenorhabditis elegans protein is Putative sphingolipid delta(4)-desaturase/C4-monooxygenase (ttm-5).